Consider the following 198-residue polypeptide: Nucleoid occlusion factor SlmA (198 aa).

The HTH tetR-type domain maps to 10–70 (NRREEILQSL…SLIEFIEDSL (61 aa)). Residues 33-52 (TTAKLAASVGVSEAALYRHF) constitute a DNA-binding region (H-T-H motif). Residues 117–144 (EQDRLQGRINQLFERIEAQLRQVLREKR) adopt a coiled-coil conformation.

The protein belongs to the nucleoid occlusion factor SlmA family. As to quaternary structure, homodimer. Interacts with FtsZ.

It localises to the cytoplasm. Its subcellular location is the nucleoid. In terms of biological role, required for nucleoid occlusion (NO) phenomenon, which prevents Z-ring formation and cell division over the nucleoid. Acts as a DNA-associated cell division inhibitor that binds simultaneously chromosomal DNA and FtsZ, and disrupts the assembly of FtsZ polymers. SlmA-DNA-binding sequences (SBS) are dispersed on non-Ter regions of the chromosome, preventing FtsZ polymerization at these regions. The polypeptide is Nucleoid occlusion factor SlmA (Salmonella typhi).